The sequence spans 727 residues: NADH-ubiquinone oxidoreductase 75 kDa subunit, mitochondrial (727 aa).

A mitochondrion-targeting transit peptide spans 1 to 23 (MLRIPVRKALVGLSKSSKGCVRT). The region spanning 30–108 (NLIEVFVDGQ…GWNILTNSEK (79 aa)) is the 2Fe-2S ferredoxin-type domain. Positions 64, 75, and 78 each coordinate [2Fe-2S] cluster. At Lys-84 the chain carries N6-acetyllysine. Cys-92 contacts [2Fe-2S] cluster. The 40-residue stretch at 108–147 (KTKKAREGVMEFLLANHPLDCPICDQGGECDLQDQSMMFG) folds into the 4Fe-4S His(Cys)3-ligated-type domain. Residues His-124, Cys-128, Cys-131, Cys-137, Cys-176, Cys-179, Cys-182, and Cys-226 each contribute to the [4Fe-4S] cluster site. A 4Fe-4S Mo/W bis-MGD-type domain is found at 245–301 (TRKTESIDVMDAVGSNIVVSTRTGEVMRILPRMHEDINEEWISDKTRFAYDGLKRQR). N6-acetyllysine is present on residues Lys-499 and Lys-709.

Belongs to the complex I 75 kDa subunit family. In terms of assembly, core subunit of respiratory chain NADH dehydrogenase (Complex I) which is composed of 45 different subunits. This is the largest subunit of complex I and it is a component of the iron-sulfur (IP) fragment of the enzyme. Complex I associates with ubiquinol-cytochrome reductase complex (Complex III) to form supercomplexes. Interacts with MDM2 and AKAP1. It depends on [2Fe-2S] cluster as a cofactor. Requires [4Fe-4S] cluster as cofactor.

It localises to the mitochondrion inner membrane. It catalyses the reaction a ubiquinone + NADH + 5 H(+)(in) = a ubiquinol + NAD(+) + 4 H(+)(out). Functionally, core subunit of the mitochondrial membrane respiratory chain NADH dehydrogenase (Complex I) which catalyzes electron transfer from NADH through the respiratory chain, using ubiquinone as an electron acceptor. Essential for catalysing the entry and efficient transfer of electrons within complex I. Plays a key role in the assembly and stability of complex I and participates in the association of complex I with ubiquinol-cytochrome reductase complex (Complex III) to form supercomplexes. The polypeptide is NADH-ubiquinone oxidoreductase 75 kDa subunit, mitochondrial (NDUFS1) (Bos taurus (Bovine)).